The chain runs to 108 residues: Ig kappa chain V-V region MOPC 173 (108 aa).

The interval 1–23 is framework-1; that stretch reads DIQMTQTTSSLSASLGDRVTISC. A disulfide bridge connects residues cysteine 23 and cysteine 88. The complementarity-determining-1 stretch occupies residues 24–34; it reads SASQSIGNYLB. The interval 35–49 is framework-2; the sequence is WYQQKPDGTVKLLIY. A complementarity-determining-2 region spans residues 50–56; it reads YTSSLHS. Residues 57-88 are framework-3; the sequence is GVPSRFSGSGSGTDYSLTISBLZPZBIATYYC. The tract at residues 89-97 is complementarity-determining-3; sequence QQYSKLPRT. The interval 98–108 is framework-4; sequence FGGGTKLEIKR.

The chain is Ig kappa chain V-V region MOPC 173 from Mus musculus (Mouse).